The sequence spans 335 residues: Beta-ketoacyl-[acyl-carrier-protein] synthase III (335 aa).

Active-site residues include C119 and H261. The tract at residues 262–266 (QANQR) is ACP-binding. Residue N291 is part of the active site.

The protein belongs to the thiolase-like superfamily. FabH family. Homodimer.

The protein localises to the cytoplasm. The catalysed reaction is malonyl-[ACP] + acetyl-CoA + H(+) = 3-oxobutanoyl-[ACP] + CO2 + CoA. Its pathway is lipid metabolism; fatty acid biosynthesis. Its function is as follows. Catalyzes the condensation reaction of fatty acid synthesis by the addition to an acyl acceptor of two carbons from malonyl-ACP. Catalyzes the first condensation reaction which initiates fatty acid synthesis and may therefore play a role in governing the total rate of fatty acid production. Possesses both acetoacetyl-ACP synthase and acetyl transacylase activities. Its substrate specificity determines the biosynthesis of branched-chain and/or straight-chain of fatty acids. This is Beta-ketoacyl-[acyl-carrier-protein] synthase III from Prochlorococcus marinus subsp. pastoris (strain CCMP1986 / NIES-2087 / MED4).